Reading from the N-terminus, the 191-residue chain is Recombination protein RecR (191 aa).

A C4-type zinc finger spans residues 56-71 (CQNCNFLQSNNICHFC). Residues 78-170 (KQLMIFETTS…KVTKLAQGLP (93 aa)) enclose the Toprim domain.

It belongs to the RecR family.

Its function is as follows. May play a role in DNA repair. It seems to be involved in an RecBC-independent recombinational process of DNA repair. It may act with RecF and RecO. This is Recombination protein RecR from Mycoplasmopsis pulmonis (strain UAB CTIP) (Mycoplasma pulmonis).